Reading from the N-terminus, the 539-residue chain is 4-coumarate--CoA ligase 5 (539 aa).

ATP-binding residues include serine 185, serine 186, glycine 187, threonine 188, threonine 189, and lysine 193. Residues tyrosine 235 and serine 239 each coordinate (E)-4-coumaroyl-AMP. Arginine 256 is a CoA binding site. Residues aspartate 258 to glutamine 327 are SBD1. (E)-4-coumaroyl-AMP is bound by residues alanine 305, glutamine 327, glycine 328, threonine 332, and methionine 340. Residues glutamine 327, glycine 328, and threonine 332 each contribute to the ATP site. The segment at glycine 328–tyrosine 395 is SBD2. ATP contacts are provided by aspartate 416 and arginine 431. (E)-4-coumaroyl-AMP is bound by residues lysine 433 and lysine 437. Lysine 439 and glycine 440 together coordinate CoA. Residue lysine 522 coordinates ATP.

It belongs to the ATP-dependent AMP-binding enzyme family. Mg(2+) serves as cofactor. As to expression, expressed in roots, stems, leaf blades, leaf sheaths and spikelets.

The enzyme catalyses (E)-ferulate + ATP + CoA = (E)-feruloyl-CoA + AMP + diphosphate. It carries out the reaction (E)-4-coumarate + ATP + CoA = (E)-4-coumaroyl-CoA + AMP + diphosphate. It catalyses the reaction (E)-sinapate + ATP + CoA = (E)-sinapoyl-CoA + AMP + diphosphate. The catalysed reaction is (E)-caffeate + ATP + CoA = (E)-caffeoyl-CoA + AMP + diphosphate. The enzyme catalyses (E)-cinnamate + ATP + CoA = (E)-cinnamoyl-CoA + AMP + diphosphate. It carries out the reaction (E)-ferulate + ATP + H(+) = (E)-feruloyl-AMP + diphosphate. It catalyses the reaction (E)-feruloyl-AMP + CoA = (E)-feruloyl-CoA + AMP + H(+). The catalysed reaction is (E)-4-coumarate + ATP + H(+) = (E)-4-coumaroyl-AMP + diphosphate. The enzyme catalyses (E)-4-coumaroyl-AMP + CoA = (E)-4-coumaroyl-CoA + AMP + H(+). It carries out the reaction (E)-sinapate + ATP + H(+) = (E)-sinapoyl-AMP + diphosphate. It catalyses the reaction (E)-sinapoyl-AMP + CoA = (E)-sinapoyl-CoA + AMP + H(+). The catalysed reaction is (E)-caffeate + ATP + H(+) = (E)-caffeoyl-AMP + diphosphate. The enzyme catalyses (E)-caffeoyl-AMP + CoA = (E)-caffeoyl-CoA + AMP + H(+). It participates in phytoalexin biosynthesis; 3,4',5-trihydroxystilbene biosynthesis; 3,4',5-trihydroxystilbene from trans-4-coumarate: step 1/2. Involved in the phenylpropanoid metabolism by mediating the activation of a number of hydroxycinnamates for the biosynthesis of monolignols and other phenolic secondary metabolites. Catalyzes the formation of CoA esters of cinnamate, 4-coumarate, caffeate and ferulate. Is also able to convert sinapate to its corresponding CoA ester, a reaction that is rarely observed in 4CL catalysis. Is more efficient with substrates in the following order: ferulate &gt; 4-coumarate &gt; sinapate &gt; caffeate &gt; cinnamate. Follows a two-step reaction mechanism, wherein the carboxylate substrate first undergoes adenylation by ATP, followed by a thioesterification in the presence of CoA to yield the final CoA thioesters. This is 4-coumarate--CoA ligase 5 from Oryza sativa subsp. japonica (Rice).